The following is a 436-amino-acid chain: Probable sodium/metabolite cotransporter BASS4, chloroplastic (436 aa).

The N-terminal 47 residues, 1–47 (MAIASTLASTQNPFLCLRQPPSPGNRSVVFRRCQDPCGRRWISRSIR), are a transit peptide targeting the chloroplast. Helical transmembrane passes span 109-129 (FLPL…TLGC), 131-151 (ADKY…SGLT), 157-177 (IGAA…ILLL), 195-215 (LVTG…GVAL), 225-245 (LALA…PFWV), 257-277 (FPTD…LIIG), 297-314 (LFSK…WIQV), 328-348 (VFLA…AFNA), and 403-423 (PCVA…NLWL).

The protein belongs to the bile acid:sodium symporter (BASS) (TC 2.A.28) family.

The protein localises to the membrane. The protein resides in the plastid. Its subcellular location is the chloroplast envelope. May function as sodium-coupled metabolite transporter across the chloroplast envelope. This Arabidopsis thaliana (Mouse-ear cress) protein is Probable sodium/metabolite cotransporter BASS4, chloroplastic (BASS4).